The primary structure comprises 784 residues: Lon protease (784 aa).

The Lon N-terminal domain occupies 11–204; sequence IPVLPLRDVV…YLMAMMESEI (194 aa). Residue 356 to 363 participates in ATP binding; it reads GPPGVGKT. A Lon proteolytic domain is found at 592–773; it reads ENRVGQVTGL…EEVLTLALQN (182 aa). Residues serine 679 and lysine 722 contribute to the active site.

It belongs to the peptidase S16 family. As to quaternary structure, homohexamer. Organized in a ring with a central cavity. ATP binding and hydrolysis do not affect the oligomeric state of the enzyme.

It is found in the cytoplasm. It catalyses the reaction Hydrolysis of proteins in presence of ATP.. With respect to regulation, contains an allosteric site (distinct from its active site), whose occupancy by an unfolded polypeptide leads to enzyme activation. Its function is as follows. ATP-dependent serine protease that mediates the selective degradation of mutant and abnormal proteins as well as certain short-lived regulatory proteins. Required for cellular homeostasis and for survival from DNA damage and developmental changes induced by stress. Degrades polypeptides processively to yield small peptide fragments that are 5 to 10 amino acids long. Binds to DNA in a double-stranded, site-specific manner. Endogenous substrates include the regulatory proteins RcsA and SulA, the transcriptional activator SoxS, and UmuD. Its overproduction specifically inhibits translation through at least two different pathways, one of them being the YoeB-YefM toxin-antitoxin system. The chain is Lon protease from Escherichia coli O6:H1 (strain CFT073 / ATCC 700928 / UPEC).